Here is a 647-residue protein sequence, read N- to C-terminus: RalA-binding protein 1 (647 aa).

Disordered regions lie at residues 1–151 (MTEC…EKKC) and 163–186 (WKEKKKKKKPTQEPEVPQTDAPSL). The residue at position 2 (threonine 2) is an N-acetylthreonine. A compositionally biased stretch (polar residues) spans 24 to 33 (LTRTPSSEEI). Residues serine 29, serine 30, and serine 34 each carry the phosphoserine modification. Threonine 44 is modified (phosphothreonine). Residues serine 48 and serine 62 each carry the phosphoserine modification. A compositionally biased stretch (basic and acidic residues) spans 52 to 68 (DILHEPPDIVSDDEKDH). An ATP-binding site is contributed by 69-74 (GKKKGK). Residues 69 to 79 (GKKKGKFKKKE) show a composition bias toward basic residues. Phosphoserine occurs at positions 92 and 93. Over residues 102–118 (KMKRSKGIHVFKKPSFS) the composition is skewed to basic residues. A nuclear localization signal region spans residues 102-119 (KMKRSKGIHVFKKPSFSK). A compositionally biased stretch (basic and acidic residues) spans 119 to 151 (KKKEKDFKIKEKPKEEKHKEEKHKEEKHKEKKC). A mediates association with membranes and could form transmembrane domains region spans residues 154–219 (FTAADVVKQW…PAVFRECVDY (66 aa)). Residues 192–380 (APFADAVERT…VLLKQVTRPL (189 aa)) enclose the Rho-GAP domain. Residues 403–499 (RRQEFLLNCL…LTEQEELLAM (97 aa)) form a mediates interaction with RALA and RALB region. Position 418-425 (418-425 (GGIKDFSK)) interacts with ATP. 2 positions are modified to phosphoserine: serine 461 and serine 463. The interval 500–647 (EQFLRRQIAS…PSKDRKETPI (148 aa)) is mediates interaction with REPS1 and REPS2. Disordered stretches follow at residues 525-550 (QSRQHGRSETEEYSSDSESESEDEEE) and 601-647 (EQQL…ETPI). Residues 535-550 (EEYSSDSESESEDEEE) show a composition bias toward acidic residues. Residues 628–647 (RAAKEQAKPSPSKDRKETPI) are compositionally biased toward basic and acidic residues. Position 637 is a phosphoserine (serine 637).

As to quaternary structure, interacts with the GTP-bound form of RALA (via effector domain); during mitosis, recruits RALBP1 to the mitochondrion where it promotes DNM1L phosphorylation and mitochondrial fission. Interacts with DNM1L; mediates its mitotic kinase cyclin B-CDK1-mediated phosphorylation during mitosis to promote mitochondrial fission. Interacts with the mitotic kinase cyclin B-CDK1 during mitosis. Interacts with the GTP-bound form of RALB (via effector domain). Interacts with REPS1; the interaction is direct and does not affect RALA-binding nor GTPase activator activity of RALBP1. Interacts with REPS2; the interaction is direct and does not affect RALA-binding nor GTPase activator activity of RALBP1. Interacts with EPN1, NUMB and TFAP2A during interphase and mitosis. Interacts with AP2M1; as part of the AP2 complex. Interacts with CDC42. Interacts with RAC1. Tyrosine-phosphorylated upon stimulation of cells with EGF. Post-translationally, may undergo proteolytic cleavage to give peptides which reassemble to form a transporter complex. In terms of tissue distribution, ubiquitously expressed.

The protein resides in the cell membrane. The protein localises to the cytoplasm. Its subcellular location is the cytosol. It is found in the cytoskeleton. It localises to the spindle pole. The protein resides in the nucleus. The protein localises to the mitochondrion. The catalysed reaction is an S-substituted glutathione(in) + ATP + H2O = an S-substituted glutathione(out) + ADP + phosphate + H(+). It catalyses the reaction ATP + H2O + xenobioticSide 1 = ADP + phosphate + xenobioticSide 2.. It carries out the reaction leukotriene C4(in) + ATP + H2O = leukotriene C4(out) + ADP + phosphate + H(+). In terms of biological role, multifunctional protein that functions as a downstream effector of RALA and RALB. As a GTPase-activating protein/GAP can inactivate CDC42 and RAC1 by stimulating their GTPase activity. As part of the Ral signaling pathway, may also regulate ligand-dependent EGF and insulin receptors-mediated endocytosis. During mitosis, may act as a scaffold protein in the phosphorylation of EPSIN/EPN1 by the mitotic kinase cyclin B-CDK1, preventing endocytosis during that phase of the cell cycle. During mitosis, also controls mitochondrial fission as an effector of RALA. Recruited to mitochondrion by RALA, acts as a scaffold to foster the mitotic kinase cyclin B-CDK1-mediated phosphorylation and activation of DNM1L. Could also function as a primary ATP-dependent active transporter for glutathione conjugates of electrophiles. May also actively catalyze the efflux of a wide range of substrates including xenobiotics like doxorubicin (DOX) contributing to cell multidrug resistance. The sequence is that of RalA-binding protein 1 from Rattus norvegicus (Rat).